The primary structure comprises 117 residues: UPF0102 protein YPN_3432 (117 aa).

The protein belongs to the UPF0102 family.

The protein is UPF0102 protein YPN_3432 of Yersinia pestis bv. Antiqua (strain Nepal516).